A 304-amino-acid polypeptide reads, in one-letter code: Ornithine carbamoyltransferase (304 aa).

Carbamoyl phosphate-binding positions include 53–56 (STRT), Gln80, Arg104, and 131–134 (HPCQ). Residues Asn162, Asp222, and 226-227 (SM) each bind L-ornithine. Carbamoyl phosphate-binding positions include 261 to 262 (CL) and Arg289.

The protein belongs to the aspartate/ornithine carbamoyltransferase superfamily. OTCase family.

The protein localises to the cytoplasm. It catalyses the reaction carbamoyl phosphate + L-ornithine = L-citrulline + phosphate + H(+). The protein operates within amino-acid biosynthesis; L-arginine biosynthesis; L-arginine from L-ornithine and carbamoyl phosphate: step 1/3. Its function is as follows. Reversibly catalyzes the transfer of the carbamoyl group from carbamoyl phosphate (CP) to the N(epsilon) atom of ornithine (ORN) to produce L-citrulline. This chain is Ornithine carbamoyltransferase, found in Rhizobium johnstonii (strain DSM 114642 / LMG 32736 / 3841) (Rhizobium leguminosarum bv. viciae).